A 303-amino-acid chain; its full sequence is UDP-3-O-acyl-N-acetylglucosamine deacetylase (303 aa).

Residues histidine 78, histidine 237, and aspartate 241 each contribute to the Zn(2+) site. Histidine 264 (proton donor) is an active-site residue.

It belongs to the LpxC family. It depends on Zn(2+) as a cofactor.

It catalyses the reaction a UDP-3-O-[(3R)-3-hydroxyacyl]-N-acetyl-alpha-D-glucosamine + H2O = a UDP-3-O-[(3R)-3-hydroxyacyl]-alpha-D-glucosamine + acetate. Its pathway is glycolipid biosynthesis; lipid IV(A) biosynthesis; lipid IV(A) from (3R)-3-hydroxytetradecanoyl-[acyl-carrier-protein] and UDP-N-acetyl-alpha-D-glucosamine: step 2/6. Its function is as follows. Catalyzes the hydrolysis of UDP-3-O-myristoyl-N-acetylglucosamine to form UDP-3-O-myristoylglucosamine and acetate, the committed step in lipid A biosynthesis. In Pseudomonas putida (strain ATCC 700007 / DSM 6899 / JCM 31910 / BCRC 17059 / LMG 24140 / F1), this protein is UDP-3-O-acyl-N-acetylglucosamine deacetylase.